The primary structure comprises 979 residues: Ubiquitin carboxyl-terminal hydrolase 37 (979 aa).

Residues 32 to 34 (KDN) carry the KEN box 1 motif. 2 short sequence motifs (D-box) span residues 71–79 (RLMLTLQDN) and 96–105 (RLFLDAVHQN). Serine 114 bears the Phosphoserine mark. Disordered regions lie at residues 116–178 (GSGS…TGGG) and 192–240 (STPL…SRKY). The segment covering 135–148 (RQLSYSDNQASSKR) has biased composition (polar residues). Residues 149–159 (GSLETKDEIPF) are compositionally biased toward basic and acidic residues. Positions 160–168 (RKVLGSPGR) match the D-box 3 motif. A Phosphoserine modification is found at serine 212. The KEN box 2 motif lies at 222–224 (KEN). Residues 341–951 (QGFSNLGNTC…SGYIFFYMHK (611 aa)) enclose the USP domain. Cysteine 350 serves as the catalytic Nucleophile. Phosphoserine; by CDK2 is present on serine 628. 2 positions are modified to phosphoserine: serine 650 and serine 652. The region spanning 704 to 723 (SEEEVLAAVLEISRREASPV) is the UIM 1 domain. The disordered stretch occupies residues 719 to 795 (EASPVLSPED…TPEGSQGEVD (77 aa)). At serine 770 the chain carries Phosphoserine. Residues 774–786 (ITKDCDENKENKT) are compositionally biased toward basic and acidic residues. The KEN box 3 signature appears at 782–784 (KEN). 2 consecutive UIM domains span residues 806–825 (REEQ…QEAW) and 828–847 (KEDD…FNNS). Histidine 906 serves as the catalytic Proton acceptor.

It belongs to the peptidase C19 family. In terms of assembly, interacts with FZR1/CDH1. Interacts with CDT1. Polyubiquitinated via 'Lys-11'-linked ubiquitin by the APC(CDH1) complex during late mitosis, leading to its degradation. Able to mediate auto-deubiquitination. In terms of processing, phosphorylated at Ser-628 by CDK2 during G1/S phase but not during mitosis; phosphorylation at Ser-628 is required for deubiquitinase activity. Also polyubiquitinated during early G1 phase, without leading to degradation. Phosphorylated at Ser-114 by ATM following DNA damage, which in turn increases its deubiquitination activity towards BLM.

The protein resides in the nucleus. It is found in the chromosome. The catalysed reaction is Thiol-dependent hydrolysis of ester, thioester, amide, peptide and isopeptide bonds formed by the C-terminal Gly of ubiquitin (a 76-residue protein attached to proteins as an intracellular targeting signal).. Deubiquitinase that plays a role in different processes including cell cycle regulation, DNA replication or DNA damage response. Antagonizes the anaphase-promoting complex (APC/C) during G1/S transition by mediating deubiquitination of cyclin-A (CCNA1 and CCNA2), thereby promoting S phase entry. Specifically mediates deubiquitination of 'Lys-11'-linked polyubiquitin chains, a specific ubiquitin-linkage type mediated by the APC/C complex. Phosphorylation at Ser-628 during G1/S phase maximizes the deubiquitinase activity, leading to prevent degradation of cyclin-A (CCNA1 and CCNA2). Plays an important role in the regulation of DNA replication by stabilizing the licensing factor CDT1. Also plays an essential role beyond S-phase entry to promote the efficiency and fidelity of replication by deubiquitinating checkpoint kinase 1/CHK1, promoting its stability. Sustains the DNA damage response (DDR) by deubiquitinating and stabilizing the ATP-dependent DNA helicase BLM. Mechanistically, DNA double-strand breaks (DSB) promotes ATM-mediated phosphorylation of USP37 and enhances the binding between USP37 and BLM. Promotes cell migration by deubiquitinating and stabilizing the epithelial-mesenchymal transition (EMT)-inducing transcription factor SNAI. Plays a role in the regulation of mitotic spindle assembly and mitotic progression by associating with chromatin-associated WAPL and stabilizing it through deubiquitination. The sequence is that of Ubiquitin carboxyl-terminal hydrolase 37 from Mus musculus (Mouse).